A 293-amino-acid polypeptide reads, in one-letter code: Pyridoxal 5'-phosphate synthase subunit PdxS (293 aa).

Position 23 (D23) interacts with D-ribose 5-phosphate. The active-site Schiff-base intermediate with D-ribose 5-phosphate is the K80. G152 contributes to the D-ribose 5-phosphate binding site. R164 serves as a coordination point for D-glyceraldehyde 3-phosphate. Residues G213 and 234 to 235 each bind D-ribose 5-phosphate; that span reads GS.

The protein belongs to the PdxS/SNZ family. As to quaternary structure, in the presence of PdxT, forms a dodecamer of heterodimers.

It carries out the reaction aldehydo-D-ribose 5-phosphate + D-glyceraldehyde 3-phosphate + L-glutamine = pyridoxal 5'-phosphate + L-glutamate + phosphate + 3 H2O + H(+). Its pathway is cofactor biosynthesis; pyridoxal 5'-phosphate biosynthesis. Functionally, catalyzes the formation of pyridoxal 5'-phosphate from ribose 5-phosphate (RBP), glyceraldehyde 3-phosphate (G3P) and ammonia. The ammonia is provided by the PdxT subunit. Can also use ribulose 5-phosphate and dihydroxyacetone phosphate as substrates, resulting from enzyme-catalyzed isomerization of RBP and G3P, respectively. This is Pyridoxal 5'-phosphate synthase subunit PdxS from Herpetosiphon aurantiacus (strain ATCC 23779 / DSM 785 / 114-95).